We begin with the raw amino-acid sequence, 332 residues long: HTH-type transcriptional regulator RegA (332 aa).

In terms of domain architecture, HTH lacI-type spans 1–57; sequence MATSIKDVAREAGVSIATVSRVLNDIDVVNEDTKKKVLDAIKELGYRPNIVARSLKT. A DNA-binding region (H-T-H motif) is located at residues 5–24; the sequence is IKDVAREAGVSIATVSRVLN.

Functionally, involved in the regulation of amylase production. This is HTH-type transcriptional regulator RegA (regA) from Clostridium saccharobutylicum.